Reading from the N-terminus, the 124-residue chain is Fluoride-specific ion channel FluC (124 aa).

4 helical membrane passes run 3–23, 34–54, 68–88, and 100–120; these read VLLI…VSNL, IGTL…FIFI, LLLI…IETF, and ALNV…GVLI. Residues Gly75 and Thr78 each contribute to the Na(+) site.

This sequence belongs to the fluoride channel Fluc/FEX (TC 1.A.43) family.

It is found in the cell inner membrane. The catalysed reaction is fluoride(in) = fluoride(out). Its activity is regulated as follows. Na(+) is not transported, but it plays an essential structural role and its presence is essential for fluoride channel function. Its function is as follows. Fluoride-specific ion channel. Important for reducing fluoride concentration in the cell, thus reducing its toxicity. In Coxiella burnetii (strain CbuK_Q154) (Coxiella burnetii (strain Q154)), this protein is Fluoride-specific ion channel FluC.